We begin with the raw amino-acid sequence, 403 residues long: Probable eukaryotic initiation factor 4A (403 aa).

Residues 1-29 (MSQQDRVAPQDQDSFLDDQPGVRPIPSFD) form a disordered region. The Q motif motif lies at 26 to 54 (PSFDDMPLHQNLLRGIYSYGFEKPSSIQQ). The Helicase ATP-binding domain maps to 57 to 230 (IAPFTRGGDI…KKFMRDPVRI (174 aa)). 70–77 (AQSGTGKT) lines the ATP pocket. Positions 178 to 181 (DEAD) match the DEAD box motif. The Helicase C-terminal domain occupies 241-401 (GIKQFFIAVE…ELPVDFAAYL (161 aa)).

The protein belongs to the DEAD box helicase family. eIF4A subfamily. In terms of assembly, eIF4F is a multi-subunit complex, the composition of which varies with external and internal environmental conditions. It is composed of at least EIF4A, EIF4E and EIF4G.

The enzyme catalyses ATP + H2O = ADP + phosphate + H(+). ATP-dependent RNA helicase which is a subunit of the eIF4F complex involved in cap recognition and is required for mRNA binding to ribosome. In the current model of translation initiation, eIF4A unwinds RNA secondary structures in the 5'-UTR of mRNAs which is necessary to allow efficient binding of the small ribosomal subunit, and subsequent scanning for the initiator codon. In Leishmania braziliensis, this protein is Probable eukaryotic initiation factor 4A.